A 454-amino-acid polypeptide reads, in one-letter code: MSDNDTIVAQATPPGRGGVGILRISGLKAREVAETVLGKLPKPRYADYLPFKDADGSVLDQGIALWFPGPNSFTGEDVLELQGHGGPVILDLLLKRILTIPGLRIARPGEFSERAFLNDKLDLAQAEAIADLIDASSEQAARSALNSLQGAFSARVNHLVEALTHLRIYVEAAIDFPDEEIDFLSDGKIEAQLNDVIADLDAVRAEARQGSLLREGMKVVIAGRPNAGKSSLLNALAGREAAIVTDIAGTTRDVLREHIHIDGMPLHIIDTAGLREASDEVERIGIERAWQEIEQADRVLFMVDGTTTDAVDPAEIWPEFIARLPAKLPITVVRNKADITGETLGMSEVNGHALIRLSARTGEGVDVLRNHLKQSMGFDTNMEGGFLARRRHLQALEQAAEHLQQGKAQLLGAWAGELLAEELRLAQQNLSEITGEFTSDDLLGRIFSSFCIGK.

(6S)-5-formyl-5,6,7,8-tetrahydrofolate-binding residues include R23, E80, and K120. A TrmE-type G domain is found at 216-377; sequence GMKVVIAGRP…LRNHLKQSMG (162 aa). Residue N226 participates in K(+) binding. GTP contacts are provided by residues 226-231, 245-251, 270-273, 335-338, and 358-360; these read NAGKSS, TDIAGTT, DTAG, NKAD, and SAR. Mg(2+) is bound at residue S230. K(+) is bound by residues T245, I247, and T250. Position 251 (T251) interacts with Mg(2+). Residue K454 coordinates (6S)-5-formyl-5,6,7,8-tetrahydrofolate.

The protein belongs to the TRAFAC class TrmE-Era-EngA-EngB-Septin-like GTPase superfamily. TrmE GTPase family. Homodimer. Heterotetramer of two MnmE and two MnmG subunits. K(+) is required as a cofactor.

Its subcellular location is the cytoplasm. Functionally, exhibits a very high intrinsic GTPase hydrolysis rate. Involved in the addition of a carboxymethylaminomethyl (cmnm) group at the wobble position (U34) of certain tRNAs, forming tRNA-cmnm(5)s(2)U34. This is tRNA modification GTPase MnmE from Escherichia coli (strain SMS-3-5 / SECEC).